We begin with the raw amino-acid sequence, 226 residues long: ATP synthase subunit a (226 aa).

A run of 5 helical transmembrane segments spans residues 17–37 (FNYL…AKLA), 79–99 (LVAT…IPGF), 105–125 (SLNL…FEGI), 168–188 (FGNI…APWV), and 200–222 (MALL…AVVV).

This sequence belongs to the ATPase A chain family. In terms of assembly, F-type ATPases have 2 components, CF(1) - the catalytic core - and CF(0) - the membrane proton channel. CF(1) has five subunits: alpha(3), beta(3), gamma(1), delta(1), epsilon(1). CF(0) has three main subunits: a(1), b(2) and c(9-12). The alpha and beta chains form an alternating ring which encloses part of the gamma chain. CF(1) is attached to CF(0) by a central stalk formed by the gamma and epsilon chains, while a peripheral stalk is formed by the delta and b chains.

It is found in the cell inner membrane. Key component of the proton channel; it plays a direct role in the translocation of protons across the membrane. This is ATP synthase subunit a from Campylobacter fetus subsp. fetus (strain 82-40).